The following is a 232-amino-acid chain: Ras association domain-containing protein 3 (232 aa).

N-acetylserine is present on serine 2. The segment at 25–46 (RAPPGKSRSGQPDVEKEKETHN) is disordered. The segment covering 37–46 (DVEKEKETHN) has biased composition (basic and acidic residues). The region spanning 78-180 (YTGFIKVQME…TLSFVLREHE (103 aa)) is the Ras-associating domain. An SARAH domain is found at 181–228 (IGEWEAFSLPELQNFLRILDKEEDEQLQSLKRRYTAYRQKLEEALGEV).

It localises to the cytoplasm. The protein resides in the cytoskeleton. The chain is Ras association domain-containing protein 3 (Rassf3) from Mus musculus (Mouse).